A 148-amino-acid chain; its full sequence is Ubiquitin-conjugating enzyme E2-16 kDa (148 aa).

The UBC core domain occupies 2 to 148 (SSSKRIAKEL…AKEWTKKYAV (147 aa)). Ser-12 carries the phosphoserine modification. Cys-86 (glycyl thioester intermediate) is an active-site residue. Lys-91 is covalently cross-linked (Glycyl lysine isopeptide (Lys-Gly) (interchain with G-Cter in ubiquitin)).

This sequence belongs to the ubiquitin-conjugating enzyme family. Component of the RSP5-UBA1-UBC5 ubiquitin ligase complex composed of E3 RSP5, E1 UBA1 and E2 UBC5. The N-terminus is blocked.

It carries out the reaction S-ubiquitinyl-[E1 ubiquitin-activating enzyme]-L-cysteine + [E2 ubiquitin-conjugating enzyme]-L-cysteine = [E1 ubiquitin-activating enzyme]-L-cysteine + S-ubiquitinyl-[E2 ubiquitin-conjugating enzyme]-L-cysteine.. The protein operates within protein modification; protein ubiquitination. Functionally, catalyzes the covalent attachment of ubiquitin to other proteins. Mediates the selective degradation of short-lived and abnormal proteins. The RSP5-UBA1-UBC5 ubiquitin ligase complex ubiquitinates RPO21 forming 'Lys-63'-linked polyubiquitin chains. This Saccharomyces cerevisiae (strain ATCC 204508 / S288c) (Baker's yeast) protein is Ubiquitin-conjugating enzyme E2-16 kDa (UBC5).